The primary structure comprises 884 residues: Chondroitin sulfate synthase 3 (884 aa).

Residues 1 to 7 (MAVRSRR) lie on the Cytoplasmic side of the membrane. Residues 8-28 (PWVSVALGLVLGFTAASWLIA) traverse the membrane as a helical; Signal-anchor for type II membrane protein segment. Residues 29 to 884 (PRVAELSEKR…LGVRDNRTLS (856 aa)) lie on the Lumenal side of the membrane. Residues 47 to 164 (YYGRSATGPR…NGSGDGGAAV (118 aa)) form a disordered region. 2 stretches are compositionally biased toward low complexity: residues 60-69 (QQLLPQPQSR) and 84-96 (PGPQQPEAAPGGP). N-linked (GlcNAc...) asparagine glycans are attached at residues Asn155 and Asn281. Residues 437–456 (SNSEVSKEDQQLGRTPSFNH) are disordered. N-linked (GlcNAc...) asparagine glycosylation is present at Asn712. A divalent metal cation is bound by residues Asp722 and His836. Residue Asn880 is glycosylated (N-linked (GlcNAc...) asparagine).

It belongs to the chondroitin N-acetylgalactosaminyltransferase family. Co(2+) serves as cofactor. Mn(2+) is required as a cofactor. Requires Cd(2+) as cofactor.

It localises to the golgi apparatus. Its subcellular location is the golgi stack membrane. The catalysed reaction is 3-O-(beta-D-GlcA-(1-&gt;3)-beta-D-GalNAc-(1-&gt;4)-beta-D-GlcA-(1-&gt;3)-beta-D-Gal-(1-&gt;3)-beta-D-Gal-(1-&gt;4)-beta-D-Xyl)-L-seryl-[protein] + UDP-N-acetyl-alpha-D-galactosamine = 3-O-(beta-D-GalNAc-(1-&gt;4)-beta-D-GlcA-(1-&gt;3)-beta-D-GalNAc-(1-&gt;4)-beta-D-GlcA-(1-&gt;3)-beta-D-Gal-(1-&gt;3)-beta-D-Gal-(1-&gt;4)-beta-D-Xyl)-L-seryl-[protein] + UDP + H(+). The enzyme catalyses 3-O-{beta-D-GlcA-(1-&gt;3)-[beta-D-GalNAc-(1-&gt;4)-beta-D-GlcA-(1-&gt;3)](n)-beta-D-GalNAc-(1-&gt;4)-beta-D-GlcA-(1-&gt;3)-beta-D-Gal-(1-&gt;3)-beta-D-Gal-(1-&gt;4)-beta-D-Xyl}-L-seryl-[protein] + UDP-N-acetyl-alpha-D-galactosamine = 3-O-{[beta-D-GalNAc-(1-&gt;4)-beta-D-GlcA-(1-&gt;3)](n+1)-beta-D-GalNAc-(1-&gt;4)-beta-D-GlcA-(1-&gt;3)-beta-D-Gal-(1-&gt;3)-beta-D-Gal-(1-&gt;4)-beta-D-Xyl}-L-seryl-[protein] + UDP + H(+). It catalyses the reaction 3-O-(beta-D-GalNAc-(1-&gt;4)-beta-D-GlcA-(1-&gt;3)-beta-D-Gal-(1-&gt;3)-beta-D-Gal-(1-&gt;4)-beta-D-Xyl)-L-seryl-[protein] + UDP-alpha-D-glucuronate = 3-O-(beta-D-GlcA-(1-&gt;3)-beta-D-GalNAc-(1-&gt;4)-beta-D-GlcA-(1-&gt;3)-beta-D-Gal-(1-&gt;3)-beta-D-Gal-(1-&gt;4)-beta-D-Xyl)-L-seryl-[protein] + UDP + H(+). It carries out the reaction 3-O-{[beta-D-GalNAc-(1-&gt;4)-beta-D-GlcA-(1-&gt;3)](n)-beta-D-GalNAc-(1-&gt;4)-beta-D-GlcA-(1-&gt;3)-beta-D-Gal-(1-&gt;3)-beta-D-Gal-(1-&gt;4)-beta-D-Xyl}-L-seryl-[protein] + UDP-alpha-D-glucuronate = 3-O-{beta-D-GlcA-(1-&gt;3)-[beta-D-GalNAc-(1-&gt;4)-beta-D-GlcA-(1-&gt;3)](n)-beta-D-GalNAc-(1-&gt;4)-beta-D-GlcA-(1-&gt;3)-beta-D-Gal-(1-&gt;3)-beta-D-Gal-(1-&gt;4)-beta-D-Xyl}-L-seryl-[protein] + UDP + H(+). Has both beta-1,3-glucuronic acid and beta-1,4-N-acetylgalactosamine transferase activity. Transfers glucuronic acid (GlcUA) from UDP-GlcUA and N-acetylgalactosamine (GalNAc) from UDP-GalNAc to the non-reducing end of the elongating chondroitin polymer. Specific activity is much reduced compared to CHSY1. The polypeptide is Chondroitin sulfate synthase 3 (Chsy3) (Mus musculus (Mouse)).